The following is a 504-amino-acid chain: ATP synthase subunit beta (504 aa).

The disordered stretch occupies residues 1 to 23 (MAKAATPKETAAAKKPAAPKKAA). Position 182 to 189 (182 to 189 (GGAGVGKT)) interacts with ATP.

Belongs to the ATPase alpha/beta chains family. F-type ATPases have 2 components, CF(1) - the catalytic core - and CF(0) - the membrane proton channel. CF(1) has five subunits: alpha(3), beta(3), gamma(1), delta(1), epsilon(1). CF(0) has three main subunits: a(1), b(2) and c(9-12). The alpha and beta chains form an alternating ring which encloses part of the gamma chain. CF(1) is attached to CF(0) by a central stalk formed by the gamma and epsilon chains, while a peripheral stalk is formed by the delta and b chains.

Its subcellular location is the cell inner membrane. The enzyme catalyses ATP + H2O + 4 H(+)(in) = ADP + phosphate + 5 H(+)(out). Its function is as follows. Produces ATP from ADP in the presence of a proton gradient across the membrane. The catalytic sites are hosted primarily by the beta subunits. The chain is ATP synthase subunit beta from Rhizobium meliloti (strain 1021) (Ensifer meliloti).